The chain runs to 329 residues: Alpha/beta hydrolase domain-containing protein 17C (329 aa).

The tract at residues 46–85 (APEQRGPGAPAPASAASTSSASAAAQPAPQQPEEGGAGPG) is disordered. Residues 51 to 79 (GPGAPAPASAASTSSASAAAQPAPQQPEE) are compositionally biased toward low complexity. Residues Ser211, Asp276, and His305 each act as charge relay system in the active site.

The protein belongs to the AB hydrolase superfamily. ABHD17 family. Post-translationally, palmitoylated on cysteine residues located in a cysteine cluster at the N-terminus which promotes membrane localization. Palmitoylation is required for post-synaptic localization and for depalmitoylating activity towards DLG4/PSD95.

It localises to the recycling endosome membrane. Its subcellular location is the cell projection. It is found in the dendritic spine. The protein localises to the postsynaptic density membrane. The catalysed reaction is S-hexadecanoyl-L-cysteinyl-[protein] + H2O = L-cysteinyl-[protein] + hexadecanoate + H(+). Functionally, hydrolyzes fatty acids from S-acylated cysteine residues in proteins. Has depalmitoylating activity towards NRAS and DLG4/PSD95. This is Alpha/beta hydrolase domain-containing protein 17C from Bos taurus (Bovine).